Consider the following 311-residue polypeptide: Pyrimidine-specific ribonucleoside hydrolase RihA (311 aa).

Histidine 240 is a catalytic residue.

The protein belongs to the IUNH family. RihA subfamily.

Functionally, hydrolyzes cytidine or uridine to ribose and cytosine or uracil, respectively. This chain is Pyrimidine-specific ribonucleoside hydrolase RihA, found in Salmonella paratyphi A (strain ATCC 9150 / SARB42).